We begin with the raw amino-acid sequence, 87 residues long: MVNMKASMFLTFAGLVLLFVVCYASESEEKEFPREMLSSIFAVDNDFKQEERDCAGYMRECKEKLCCSGYVCSSRWKWRVLPAPWRR.

Residues 1–24 form the signal peptide; sequence MVNMKASMFLTFAGLVLLFVVCYA. Residues 25–52 constitute a propeptide that is removed on maturation; it reads SESEEKEFPREMLSSIFAVDNDFKQEER. 2 cysteine pairs are disulfide-bonded: cysteine 54–cysteine 67 and cysteine 61–cysteine 72.

Belongs to the neurotoxin 10 (Hwtx-1) family. 51 (Hntx-8) subfamily. Hntx-8 sub-subfamily. In terms of tissue distribution, expressed by the venom gland.

Its subcellular location is the secreted. Functionally, ion channel inhibitor. The sequence is that of U3-theraphotoxin-Hhn1b from Cyriopagopus hainanus (Chinese bird spider).